The following is a 409-amino-acid chain: Argininosuccinate synthase (409 aa).

Residues 13-21 (AYSGGLDTS) and Ala40 each bind ATP. The L-citrulline site is built by Tyr91 and Ser96. Residue Gly121 participates in ATP binding. Residues Thr123, Asn127, and Asp128 each coordinate L-aspartate. Asn127 contributes to the L-citrulline binding site. The L-citrulline site is built by Arg131, Ser183, Ser192, Glu268, and Tyr280.

The protein belongs to the argininosuccinate synthase family. Type 1 subfamily. In terms of assembly, homotetramer.

The protein resides in the cytoplasm. The catalysed reaction is L-citrulline + L-aspartate + ATP = 2-(N(omega)-L-arginino)succinate + AMP + diphosphate + H(+). It participates in amino-acid biosynthesis; L-arginine biosynthesis; L-arginine from L-ornithine and carbamoyl phosphate: step 2/3. The protein is Argininosuccinate synthase of Saccharophagus degradans (strain 2-40 / ATCC 43961 / DSM 17024).